A 426-amino-acid chain; its full sequence is 3-phosphoshikimate 1-carboxyvinyltransferase (426 aa).

3 residues coordinate 3-phosphoshikimate: K22, S23, and R27. Phosphoenolpyruvate is bound at residue K22. Phosphoenolpyruvate contacts are provided by G96 and R124. S170, S171, Q172, S198, D314, N337, and K341 together coordinate 3-phosphoshikimate. Q172 serves as a coordination point for phosphoenolpyruvate. The active-site Proton acceptor is the D314. The phosphoenolpyruvate site is built by R345, R387, and K412.

This sequence belongs to the EPSP synthase family. In terms of assembly, monomer.

It is found in the cytoplasm. The enzyme catalyses 3-phosphoshikimate + phosphoenolpyruvate = 5-O-(1-carboxyvinyl)-3-phosphoshikimate + phosphate. It participates in metabolic intermediate biosynthesis; chorismate biosynthesis; chorismate from D-erythrose 4-phosphate and phosphoenolpyruvate: step 6/7. Catalyzes the transfer of the enolpyruvyl moiety of phosphoenolpyruvate (PEP) to the 5-hydroxyl of shikimate-3-phosphate (S3P) to produce enolpyruvyl shikimate-3-phosphate and inorganic phosphate. In Shewanella woodyi (strain ATCC 51908 / MS32), this protein is 3-phosphoshikimate 1-carboxyvinyltransferase.